A 431-amino-acid chain; its full sequence is Trigger factor (431 aa).

A PPIase FKBP-type domain is found at 165-250 (TDTAVFDFEG…LHQIKTKKIP (86 aa)).

Belongs to the FKBP-type PPIase family. Tig subfamily.

It is found in the cytoplasm. It carries out the reaction [protein]-peptidylproline (omega=180) = [protein]-peptidylproline (omega=0). Functionally, involved in protein export. Acts as a chaperone by maintaining the newly synthesized protein in an open conformation. Functions as a peptidyl-prolyl cis-trans isomerase. The polypeptide is Trigger factor (Aster yellows witches'-broom phytoplasma (strain AYWB)).